Here is a 110-residue protein sequence, read N- to C-terminus: Large ribosomal subunit protein uL22 (110 aa).

It belongs to the universal ribosomal protein uL22 family. As to quaternary structure, part of the 50S ribosomal subunit.

This protein binds specifically to 23S rRNA; its binding is stimulated by other ribosomal proteins, e.g. L4, L17, and L20. It is important during the early stages of 50S assembly. It makes multiple contacts with different domains of the 23S rRNA in the assembled 50S subunit and ribosome. In terms of biological role, the globular domain of the protein is located near the polypeptide exit tunnel on the outside of the subunit, while an extended beta-hairpin is found that lines the wall of the exit tunnel in the center of the 70S ribosome. This Acinetobacter baylyi (strain ATCC 33305 / BD413 / ADP1) protein is Large ribosomal subunit protein uL22.